The primary structure comprises 451 residues: UPF0210 protein NMA1908 (451 aa).

Belongs to the UPF0210 family. As to quaternary structure, homodimer.

This Neisseria meningitidis serogroup A / serotype 4A (strain DSM 15465 / Z2491) protein is UPF0210 protein NMA1908.